We begin with the raw amino-acid sequence, 206 residues long: Triosephosphate isomerase (206 aa).

His-76 acts as the Electrophile in catalysis. Catalysis depends on Glu-146, which acts as the Proton acceptor.

It belongs to the triosephosphate isomerase family. As to quaternary structure, homodimer.

It catalyses the reaction D-glyceraldehyde 3-phosphate = dihydroxyacetone phosphate. The protein operates within carbohydrate biosynthesis; gluconeogenesis. It participates in carbohydrate degradation; glycolysis; D-glyceraldehyde 3-phosphate from glycerone phosphate: step 1/1. The polypeptide is Triosephosphate isomerase (Tpi) (Aedes togoi (Mosquito)).